Consider the following 350-residue polypeptide: TATA box-binding protein-like 2 (350 aa).

The disordered stretch occupies residues Glu82 to Asn150. Residues Ala94–Ser116 are compositionally biased toward basic and acidic residues. Composition is skewed to polar residues over residues Leu118–Pro128 and Ser139–Asn150.

Belongs to the TBP family. In terms of assembly, interacts with TAF3. As to expression, expressed in myotubes and myofibers (at protein level). Expressed in a wide variety of tissues with highest levels in heart, lung, liver, uterus and placenta and especially the gonads. Expression is higher in the ovary than the testis, and within the ovary expression is localized to the oocytes.

The protein resides in the cytoplasm. Its subcellular location is the nucleus. In terms of biological role, transcription factor required in complex with TAF3 for the differentiation of myoblasts into myocytes. The complex replaces TFIID at specific promoters at an early stage in the differentiation process. This is TATA box-binding protein-like 2 from Mus musculus (Mouse).